The primary structure comprises 275 residues: Phosphate import ATP-binding protein PstB (275 aa).

Residues 28–270 (IDCRDIRVFY…PREKRTEDYI (243 aa)) enclose the ABC transporter domain. Residue 60–67 (GPSGCGKS) coordinates ATP.

This sequence belongs to the ABC transporter superfamily. Phosphate importer (TC 3.A.1.7) family. In terms of assembly, the complex is composed of two ATP-binding proteins (PstB), two transmembrane proteins (PstC and PstA) and a solute-binding protein (PstS).

It is found in the cell inner membrane. It carries out the reaction phosphate(out) + ATP + H2O = ADP + 2 phosphate(in) + H(+). Its function is as follows. Part of the ABC transporter complex PstSACB involved in phosphate import. Responsible for energy coupling to the transport system. The sequence is that of Phosphate import ATP-binding protein PstB from Hyphomonas neptunium (strain ATCC 15444).